The chain runs to 241 residues: Eukaryotic translation initiation factor 3 subunit J (241 aa).

Basic and acidic residues predominate over residues 1 to 27 (MEEDWEQHGEKEEVPLPAKKPDANKWD). A disordered region spans residues 1-99 (MEEDWEQHGE…ENMTPEQKLA (99 aa)). Positions 28–45 (GEDEEEEVKDSWEDEDEL) are enriched in acidic residues. Residues 31–119 (EEEEVKDSWE…ESDLKNALDT (89 aa)) adopt a coiled-coil conformation. Basic and acidic residues-rich tracts occupy residues 46-58 (EEKKDEEKVETPK) and 69-90 (IVEKEKQKHEEAERRRLEKEAE).

Belongs to the eIF-3 subunit J family. In terms of assembly, component of the eukaryotic translation initiation factor 3 (eIF-3) complex.

It localises to the cytoplasm. Its function is as follows. Component of the eukaryotic translation initiation factor 3 (eIF-3) complex, which is involved in protein synthesis of a specialized repertoire of mRNAs and, together with other initiation factors, stimulates binding of mRNA and methionyl-tRNAi to the 40S ribosome. The eIF-3 complex specifically targets and initiates translation of a subset of mRNAs involved in cell proliferation. The chain is Eukaryotic translation initiation factor 3 subunit J from Culex quinquefasciatus (Southern house mosquito).